We begin with the raw amino-acid sequence, 147 residues long: Lysozyme C (147 aa).

An N-terminal signal peptide occupies residues 1–18 (MRSLLILVLCFLPLAALG). The C-type lysozyme domain occupies 19-147 (KVYGRCELAA…VHAWIRGCRL (129 aa)). Disulfide bonds link cysteine 24–cysteine 145, cysteine 48–cysteine 133, cysteine 82–cysteine 98, and cysteine 94–cysteine 112.

This sequence belongs to the glycosyl hydrolase 22 family. Monomer.

Its subcellular location is the secreted. It catalyses the reaction Hydrolysis of (1-&gt;4)-beta-linkages between N-acetylmuramic acid and N-acetyl-D-glucosamine residues in a peptidoglycan and between N-acetyl-D-glucosamine residues in chitodextrins.. In terms of biological role, lysozymes have primarily a bacteriolytic function; those in tissues and body fluids are associated with the monocyte-macrophage system and enhance the activity of immunoagents. The protein is Lysozyme C (LYZ) of Meleagris gallopavo (Wild turkey).